We begin with the raw amino-acid sequence, 177 residues long: Ribosome maturation factor RimM (177 aa).

One can recognise a PRC barrel domain in the interval 101-174 (EGEFHLLDLV…WLLLTPPPGL (74 aa)).

The protein belongs to the RimM family. As to quaternary structure, binds ribosomal protein uS19.

It is found in the cytoplasm. An accessory protein needed during the final step in the assembly of 30S ribosomal subunit, possibly for assembly of the head region. Essential for efficient processing of 16S rRNA. May be needed both before and after RbfA during the maturation of 16S rRNA. It has affinity for free ribosomal 30S subunits but not for 70S ribosomes. The protein is Ribosome maturation factor RimM of Synechococcus sp. (strain CC9605).